The chain runs to 264 residues: Proteasome subunit beta type-4 (264 aa).

At methionine 1 the chain carries N-acetylmethionine. A propeptide spanning residues 1–45 (MEAFWESRAGHWAGGPAPGQFYRIPATPSGLMDPASAPCEGPITR) is cleaved from the precursor. Tyrosine 102 is modified (phosphotyrosine).

This sequence belongs to the peptidase T1B family. The 26S proteasome consists of a 20S proteasome core and two 19S regulatory subunits. The 20S proteasome core is a barrel-shaped complex made of 28 subunits that are arranged in four stacked rings. The two outer rings are each formed by seven alpha subunits, and the two inner rings are formed by seven beta subunits. The proteolytic activity is exerted by three beta-subunits PSMB5, PSMB6 and PSMB7. Forms a ternary complex with SMAD1 and OAZ1 before PSMB4 is incorporated into the 20S proteasome. Interacts with PRPF19. Detected in liver (at protein level).

The protein resides in the cytoplasm. The protein localises to the nucleus. Functionally, non-catalytic component of the 20S core proteasome complex involved in the proteolytic degradation of most intracellular proteins. This complex plays numerous essential roles within the cell by associating with different regulatory particles. Associated with two 19S regulatory particles, forms the 26S proteasome and thus participates in the ATP-dependent degradation of ubiquitinated proteins. The 26S proteasome plays a key role in the maintenance of protein homeostasis by removing misfolded or damaged proteins that could impair cellular functions, and by removing proteins whose functions are no longer required. Associated with the PA200 or PA28, the 20S proteasome mediates ubiquitin-independent protein degradation. This type of proteolysis is required in several pathways including spermatogenesis (20S-PA200 complex) or generation of a subset of MHC class I-presented antigenic peptides (20S-PA28 complex). SMAD1/OAZ1/PSMB4 complex mediates the degradation of the CREBBP/EP300 repressor SNIP1. The protein is Proteasome subunit beta type-4 (Psmb4) of Mus musculus (Mouse).